The chain runs to 108 residues: MMKGQLAGLMRQAQQMQENMKKAQDALAEIQVEGAAGGGLVKVTMTCRHDVKRVAIDASLLGEDKDMLEDLVAAAFNDALRKAEATSQEKMASVTAGMPLPPGMKLPF.

Residues 87–108 (SQEKMASVTAGMPLPPGMKLPF) form a disordered region. The segment covering 99-108 (PLPPGMKLPF) has biased composition (pro residues).

This sequence belongs to the YbaB/EbfC family. Homodimer.

The protein resides in the cytoplasm. It is found in the nucleoid. In terms of biological role, binds to DNA and alters its conformation. May be involved in regulation of gene expression, nucleoid organization and DNA protection. This chain is Nucleoid-associated protein BP1550, found in Bordetella pertussis (strain Tohama I / ATCC BAA-589 / NCTC 13251).